Here is a 265-residue protein sequence, read N- to C-terminus: Hydroxyethylthiazole kinase (265 aa).

Substrate is bound at residue M36. Positions 112 and 160 each coordinate ATP. G187 contributes to the substrate binding site.

The protein belongs to the Thz kinase family. Requires Mg(2+) as cofactor.

The catalysed reaction is 5-(2-hydroxyethyl)-4-methylthiazole + ATP = 4-methyl-5-(2-phosphooxyethyl)-thiazole + ADP + H(+). Its pathway is cofactor biosynthesis; thiamine diphosphate biosynthesis; 4-methyl-5-(2-phosphoethyl)-thiazole from 5-(2-hydroxyethyl)-4-methylthiazole: step 1/1. In terms of biological role, catalyzes the phosphorylation of the hydroxyl group of 4-methyl-5-beta-hydroxyethylthiazole (THZ). This chain is Hydroxyethylthiazole kinase, found in Clostridium perfringens (strain SM101 / Type A).